The following is a 289-amino-acid chain: Cell division protein ZipA (289 aa).

Position 1 (M1) is a topological domain, periplasmic. The chain crosses the membrane as a helical span at residues 2–22 (DIGLREWLIVIGLIVIAGILF). Residues 23-289 (DGWRRMRGGK…HERRSLMQKR (267 aa)) lie on the Cytoplasmic side of the membrane. The interval 65–141 (HREPSFDEQD…KEREKAPAVA (77 aa)) is disordered. A compositionally biased stretch (basic and acidic residues) spans 81-99 (RETKERKGGKRQEEPRQGD). The segment covering 100–114 (LDLDEGLALEADPSD) has biased composition (acidic residues).

Belongs to the ZipA family. In terms of assembly, interacts with FtsZ via their C-terminal domains.

It localises to the cell inner membrane. Functionally, essential cell division protein that stabilizes the FtsZ protofilaments by cross-linking them and that serves as a cytoplasmic membrane anchor for the Z ring. Also required for the recruitment to the septal ring of downstream cell division proteins. The sequence is that of Cell division protein ZipA from Pseudomonas aeruginosa (strain UCBPP-PA14).